A 668-amino-acid polypeptide reads, in one-letter code: Tastin (668 aa).

Disordered regions lie at residues 1–102 (MTTL…GGSN), 154–177 (ERKG…PRIP), and 189–285 (FSRL…GRHH). Ser16 is subject to Phosphoserine. Polar residues-rich tracts occupy residues 27–37 (QRCQDFSSVKS) and 55–64 (PRSTQRQRPL). Ser97 carries the post-translational modification Phosphoserine. The segment covering 158–168 (GTTQRGQSARS) has biased composition (polar residues). Ser169 is subject to Phosphoserine. Basic and acidic residues-rich tracts occupy residues 227-246 (ELRR…DRRT) and 269-282 (GEQE…DGGG). Phosphoserine is present on residues Ser306, Ser324, and Ser338. 2 disordered regions span residues 364–392 (ITLQ…HQEL) and 462–502 (TEPL…AEPE).

As to quaternary structure, directly binds bystin, and indirectly trophinin.

The protein localises to the cytoplasm. Functionally, could be involved with bystin and trophinin in a cell adhesion molecule complex that mediates an initial attachment of the blastocyst to uterine epithelial cells at the time of the embryo implantation. The chain is Tastin from Mus musculus (Mouse).